The following is a 443-amino-acid chain: Amino-acid acetyltransferase (443 aa).

The region spanning Glu296 to Arg434 is the N-acetyltransferase domain.

This sequence belongs to the acetyltransferase family. ArgA subfamily. Homohexamer.

Its subcellular location is the cytoplasm. The catalysed reaction is L-glutamate + acetyl-CoA = N-acetyl-L-glutamate + CoA + H(+). It functions in the pathway amino-acid biosynthesis; L-arginine biosynthesis; N(2)-acetyl-L-ornithine from L-glutamate: step 1/4. In Escherichia fergusonii (strain ATCC 35469 / DSM 13698 / CCUG 18766 / IAM 14443 / JCM 21226 / LMG 7866 / NBRC 102419 / NCTC 12128 / CDC 0568-73), this protein is Amino-acid acetyltransferase.